We begin with the raw amino-acid sequence, 210 residues long: Ribosomal RNA large subunit methyltransferase E (210 aa).

Residues Gly64, Trp66, Asp84, Asp100, and Asp125 each coordinate S-adenosyl-L-methionine. Lys165 functions as the Proton acceptor in the catalytic mechanism.

This sequence belongs to the class I-like SAM-binding methyltransferase superfamily. RNA methyltransferase RlmE family.

It is found in the cytoplasm. The catalysed reaction is uridine(2552) in 23S rRNA + S-adenosyl-L-methionine = 2'-O-methyluridine(2552) in 23S rRNA + S-adenosyl-L-homocysteine + H(+). Its function is as follows. Specifically methylates the uridine in position 2552 of 23S rRNA at the 2'-O position of the ribose in the fully assembled 50S ribosomal subunit. This chain is Ribosomal RNA large subunit methyltransferase E, found in Chromohalobacter salexigens (strain ATCC BAA-138 / DSM 3043 / CIP 106854 / NCIMB 13768 / 1H11).